Reading from the N-terminus, the 215-residue chain is 2-phospho-L-lactate guanylyltransferase (215 aa).

It belongs to the CofC family. In terms of assembly, homodimer.

The catalysed reaction is (2S)-2-phospholactate + GTP + H(+) = (2S)-lactyl-2-diphospho-5'-guanosine + diphosphate. The protein operates within cofactor biosynthesis; coenzyme F420 biosynthesis. Functionally, guanylyltransferase that catalyzes the activation of (2S)-2-phospholactate (2-PL) as (2S)-lactyl-2-diphospho-5'-guanosine, via the condensation of 2-PL with GTP. It is involved in the biosynthesis of coenzyme F420, a hydride carrier cofactor. In Methanoculleus marisnigri (strain ATCC 35101 / DSM 1498 / JR1), this protein is 2-phospho-L-lactate guanylyltransferase.